The chain runs to 290 residues: UPF0761 membrane protein YihY (290 aa).

Transmembrane regions (helical) follow at residues 44–64 (LLSL…FPMF), 104–124 (VGAC…DSAL), 140–160 (FAVY…SLAI), 183–203 (IFPL…VPTI), 210–230 (AIVG…GFAL), and 244–264 (VLAV…IVLL).

Belongs to the UPF0761 family.

It localises to the cell inner membrane. The polypeptide is UPF0761 membrane protein YihY (Escherichia coli O127:H6 (strain E2348/69 / EPEC)).